The sequence spans 375 residues: Zinc finger CCCH domain-containing protein 57 (375 aa).

C3H1-type zinc fingers lie at residues 42 to 70 (RHGE…HPHD), 87 to 115 (RIGQ…HPRN), 133 to 161 (RPNE…HPQT), 243 to 271 (RPGQ…HPRD), and 289 to 317 (RPGE…HPMR). The interval 352 to 375 (SVEAKPTSLPETTSAKDTIVDAQH) is disordered.

Its subcellular location is the nucleus. The sequence is that of Zinc finger CCCH domain-containing protein 57 (ZFN3) from Arabidopsis thaliana (Mouse-ear cress).